The sequence spans 181 residues: Ribosome maturation factor RimM (181 aa).

The PRC barrel domain occupies 98–177; sequence EGEFFYCDLI…KITTHNAKTL (80 aa).

Belongs to the RimM family. Binds ribosomal protein uS19.

It localises to the cytoplasm. An accessory protein needed during the final step in the assembly of 30S ribosomal subunit, possibly for assembly of the head region. Essential for efficient processing of 16S rRNA. May be needed both before and after RbfA during the maturation of 16S rRNA. It has affinity for free ribosomal 30S subunits but not for 70S ribosomes. This is Ribosome maturation factor RimM from Helicobacter pylori (strain J99 / ATCC 700824) (Campylobacter pylori J99).